The primary structure comprises 150 residues: Allograft inflammatory factor 1-like (150 aa).

At S2 the chain carries N-acetylserine. At S2 the chain carries Phosphoserine. The region spanning E47–P82 is the EF-hand 1 domain. Ca(2+) is bound by residues D60, N62, E64, and E66. The EF-hand 2; degenerate domain occupies K83 to S117. The interval K129–P150 is disordered. Phosphoserine is present on S134.

As to quaternary structure, homodimer (Potential). Monomer.

Its subcellular location is the cytoplasm. The protein localises to the cytoskeleton. The protein resides in the cell projection. It is found in the ruffle membrane. Actin-binding protein that promotes actin bundling. May neither bind calcium nor depend on calcium for function. This is Allograft inflammatory factor 1-like (AIF1L) from Homo sapiens (Human).